A 451-amino-acid polypeptide reads, in one-letter code: Target of rapamycin complex 1 subunit tco89 (451 aa).

Residues 1–35 (MERPSLSRRTSSSTVSTDGEGVYSRSTKERKRNFI) form a disordered region. A compositionally biased stretch (low complexity) spans 7 to 17 (SRRTSSSTVST). Ser70 carries the phosphoserine modification. Disordered regions lie at residues 122–164 (WDDA…PVTR), 176–264 (INSN…GNSL), and 362–437 (NQNF…DTDY). Residues 129 to 162 (NDSTAGNLDSDSALPTPSVTTNEAADSSRASSPV) show a composition bias toward polar residues. The span at 203–215 (DDSAADASTTKSS) shows a compositional bias: low complexity. Composition is skewed to polar residues over residues 228-242 (HSNN…NQPK), 362-376 (NQNF…TSAA), and 407-417 (QSASLNASMSA). Basic residues predominate over residues 419–430 (SHARQRSIHVPK).

The protein belongs to the TORC subunit TCO89 family. The target of rapamycin complex 1 (TORC1) is composed of at least mip1, pop3/wat1, tco89, toc1 and tor2. Either Thr-10, Ser-11, Ser-12, Ser-13 or Thr-14 and Ser-214 or Ser-215 and Ser-247 or Ser-249 are phosphorylated as well.

The protein resides in the cytoplasm. Component of TORC1, which regulates multiple cellular processes to control cell growth in response to environmental signals. Tor2 is essential for growth. Nutrient limitation and environmental stress signals cause inactivation of TORC1. Active TORC1 positively controls cell growth and ribosome biogenesis by regulating ribosomal protein gene expression. TORC1 negatively controls G1 cell-cycle arrest, sexual development and amino acid uptake. Represses mating, meiosis and sporulation efficiency by interfering with the functions of the transcription factor ste11 and the meiosis-promoting RNA-binding protein mei2. The polypeptide is Target of rapamycin complex 1 subunit tco89 (Schizosaccharomyces pombe (strain 972 / ATCC 24843) (Fission yeast)).